We begin with the raw amino-acid sequence, 95 residues long: Aspartyl/glutamyl-tRNA(Asn/Gln) amidotransferase subunit C (95 aa).

It belongs to the GatC family. In terms of assembly, heterotrimer of A, B and C subunits.

The catalysed reaction is L-glutamyl-tRNA(Gln) + L-glutamine + ATP + H2O = L-glutaminyl-tRNA(Gln) + L-glutamate + ADP + phosphate + H(+). The enzyme catalyses L-aspartyl-tRNA(Asn) + L-glutamine + ATP + H2O = L-asparaginyl-tRNA(Asn) + L-glutamate + ADP + phosphate + 2 H(+). Allows the formation of correctly charged Asn-tRNA(Asn) or Gln-tRNA(Gln) through the transamidation of misacylated Asp-tRNA(Asn) or Glu-tRNA(Gln) in organisms which lack either or both of asparaginyl-tRNA or glutaminyl-tRNA synthetases. The reaction takes place in the presence of glutamine and ATP through an activated phospho-Asp-tRNA(Asn) or phospho-Glu-tRNA(Gln). This Rhodopseudomonas palustris (strain BisA53) protein is Aspartyl/glutamyl-tRNA(Asn/Gln) amidotransferase subunit C.